Consider the following 385-residue polypeptide: G2/mitotic-specific cyclin-B3 (385 aa).

Positions 1–16 (MMLRSQAKNVDLTSQA) are enriched in polar residues. Disordered regions lie at residues 1–48 (MMLR…HSKG) and 63–88 (SAKRDPLGKSRTSRRDVENLPPQKSR). Composition is skewed to basic and acidic residues over residues 17–28 (DSRHQQKRKQAE) and 63–80 (SAKRDPLGKSRTSRRDVE).

It belongs to the cyclin family. Cyclin AB subfamily.

It is found in the nucleus. In terms of biological role, could be involved at the G2/M (mitosis) transition. Interacts with the CDK1 and CDK2 protein kinases. G2/M cyclins accumulate steadily during G2 and are abruptly destroyed at mitosis. Plays a role during oocyte meiosis II. In Caenorhabditis elegans, this protein is G2/mitotic-specific cyclin-B3 (cyb-3).